Here is a 290-residue protein sequence, read N- to C-terminus: 4-diphosphocytidyl-2-C-methyl-D-erythritol kinase (290 aa).

Lysine 10 is an active-site residue. An ATP-binding site is contributed by 96–106 (PIAAGLGGGSS). The active site involves aspartate 138.

This sequence belongs to the GHMP kinase family. IspE subfamily.

It catalyses the reaction 4-CDP-2-C-methyl-D-erythritol + ATP = 4-CDP-2-C-methyl-D-erythritol 2-phosphate + ADP + H(+). It participates in isoprenoid biosynthesis; isopentenyl diphosphate biosynthesis via DXP pathway; isopentenyl diphosphate from 1-deoxy-D-xylulose 5-phosphate: step 3/6. Its function is as follows. Catalyzes the phosphorylation of the position 2 hydroxy group of 4-diphosphocytidyl-2C-methyl-D-erythritol. The chain is 4-diphosphocytidyl-2-C-methyl-D-erythritol kinase from Caulobacter vibrioides (strain NA1000 / CB15N) (Caulobacter crescentus).